Consider the following 280-residue polypeptide: Putative transcription factor kapC (280 aa).

A disordered region spans residues 1–102 (MQPALAPHPS…GKRPLSTSKR (102 aa)). Residues 39–49 (PQPPAPQPPHM) show a composition bias toward pro residues. Residues 79 to 89 (TQPDVTGQETP) are compositionally biased toward polar residues. Residues 96 to 159 (PLSTSKRAAQ…EYIINLQSRL (64 aa)) form the bZIP domain. The interval 97–120 (LSTSKRAAQNRAAQRAFRQRKEAH) is basic motif. The interval 124-155 (LEGKVKAYESMGEAIKALQAENYQLREYIINL) is leucine-zipper. The disordered stretch occupies residues 169–280 (LPGNIDLSQP…EQTHGLPLIS (112 aa)). The segment covering 197 to 206 (APPPTAPQQP) has biased composition (pro residues).

The protein belongs to the bZIP family.

It localises to the nucleus. Putative transcription factor. This is Putative transcription factor kapC (kapC) from Aspergillus fumigatus (strain ATCC MYA-4609 / CBS 101355 / FGSC A1100 / Af293) (Neosartorya fumigata).